A 363-amino-acid polypeptide reads, in one-letter code: Fructose-bisphosphate aldolase, muscle type (363 aa).

Residues arginine 56 and lysine 147 each coordinate substrate. Lysine 230 serves as the catalytic Schiff-base intermediate with dihydroxyacetone-P.

Belongs to the class I fructose-bisphosphate aldolase family. As to quaternary structure, homotetramer. In terms of tissue distribution, expressed mainly in the skeletal muscle, heart muscle, brain, and some other tissues, but probably not in liver.

It carries out the reaction beta-D-fructose 1,6-bisphosphate = D-glyceraldehyde 3-phosphate + dihydroxyacetone phosphate. Its pathway is carbohydrate degradation; glycolysis; D-glyceraldehyde 3-phosphate and glycerone phosphate from D-glucose: step 4/4. This is Fructose-bisphosphate aldolase, muscle type from Lethenteron camtschaticum (Japanese lamprey).